We begin with the raw amino-acid sequence, 321 residues long: Urease accessory protein UreD (321 aa).

This sequence belongs to the UreD family. As to quaternary structure, ureD, UreF and UreG form a complex that acts as a GTP-hydrolysis-dependent molecular chaperone, activating the urease apoprotein by helping to assemble the nickel containing metallocenter of UreC. The UreE protein probably delivers the nickel.

The protein localises to the cytoplasm. Its function is as follows. Required for maturation of urease via the functional incorporation of the urease nickel metallocenter. The polypeptide is Urease accessory protein UreD (Yersinia pseudotuberculosis serotype O:1b (strain IP 31758)).